Here is a 292-residue protein sequence, read N- to C-terminus: Hypersensitive-induced response protein 4 (292 aa).

Glycine 2 carries the N-myristoyl glycine lipid modification.

As to quaternary structure, self-interacts and forms heteromers. Interacts with NB-LRR class of R proteins before R proteins (e.g. RPS2 or RPM1) are activated by the effectors.

The protein resides in the cell membrane. This is Hypersensitive-induced response protein 4 (HIR4) from Arabidopsis thaliana (Mouse-ear cress).